The primary structure comprises 194 residues: MAEVVQSGPVEAQARHVVYCGVCTLPPEYCEFGGTAKKCEEWLKEKQPELYQRLHSEEAISANLSTLSISAQERAAKDAAKKEAKAALAEARDAERKAASKVQIKRVERNKRKHVTVIAGLEVYGLENKKVAKELGKKFATGSSVTRSAAGNEEITVQGDVSDDVQDWLLEVYGKEIPEANIEIIEDKKKKGSS.

The 72-residue stretch at 102–173 folds into the SUI1 domain; that stretch reads VQIKRVERNK…DVQDWLLEVY (72 aa).

This sequence belongs to the DENR family. In terms of assembly, interacts with the 40S ribosomal subunit.

It is found in the cytoplasm. This is Translation machinery-associated protein 22 (tma22) from Aspergillus oryzae (strain ATCC 42149 / RIB 40) (Yellow koji mold).